A 386-amino-acid polypeptide reads, in one-letter code: uncharacterized protein (386 aa).

Transmembrane regions (helical) follow at residues 8 to 28 (VFVI…IAPI), 43 to 63 (IGLI…PVGV), 79 to 99 (FFYG…GFLI), 102 to 122 (IFTG…IAAI), 134 to 154 (IFNS…GILA), 156 to 176 (MYGI…AAII), 216 to 236 (FIIN…LALY), 241 to 261 (NITI…MALL), 272 to 292 (LGNI…YLLS), 297 to 317 (FLTI…SSTA), 342 to 362 (INIG…ILGI), and 365 to 385 (MYKF…LRIE).

It belongs to the major facilitator superfamily.

It localises to the cell membrane. This is an uncharacterized protein from Methanocaldococcus jannaschii (strain ATCC 43067 / DSM 2661 / JAL-1 / JCM 10045 / NBRC 100440) (Methanococcus jannaschii).